Consider the following 517-residue polypeptide: Probable protein phosphatase 2C 20 (517 aa).

The interval 1-59 (MWVMQGERRRARAPWGPPDTGGALLERWISRERRSDSRDASGSAKQRSAMGNSLPVESK) is disordered. A compositionally biased stretch (basic and acidic residues) spans 28-39 (WISRERRSDSRD). The PPM-type phosphatase domain occupies 70 to 373 (KYVVSSMQGW…DNTTVILVLF (304 aa)). Mn(2+) is bound by residues aspartate 105, glycine 106, glutamate 323, and aspartate 364. Positions 380-517 (AVPPVDTDTD…PPHDDTYHRW (138 aa)) are disordered. The segment covering 402–414 (GSNNATASDNNDP) has biased composition (polar residues). Residues 438 to 455 (DATATAVGSSSTTAVAAD) are compositionally biased toward low complexity. The segment covering 499 to 517 (LPRSNPDKSPPHDDTYHRW) has biased composition (basic and acidic residues).

The protein belongs to the PP2C family. Mg(2+) serves as cofactor. Mn(2+) is required as a cofactor.

It catalyses the reaction O-phospho-L-seryl-[protein] + H2O = L-seryl-[protein] + phosphate. It carries out the reaction O-phospho-L-threonyl-[protein] + H2O = L-threonyl-[protein] + phosphate. The sequence is that of Probable protein phosphatase 2C 20 from Oryza sativa subsp. japonica (Rice).